Consider the following 181-residue polypeptide: Adenine phosphoribosyltransferase (181 aa).

This sequence belongs to the purine/pyrimidine phosphoribosyltransferase family. As to quaternary structure, homodimer.

The protein localises to the cytoplasm. It carries out the reaction AMP + diphosphate = 5-phospho-alpha-D-ribose 1-diphosphate + adenine. Its pathway is purine metabolism; AMP biosynthesis via salvage pathway; AMP from adenine: step 1/1. Its function is as follows. Catalyzes a salvage reaction resulting in the formation of AMP, that is energically less costly than de novo synthesis. The chain is Adenine phosphoribosyltransferase from Chromohalobacter salexigens (strain ATCC BAA-138 / DSM 3043 / CIP 106854 / NCIMB 13768 / 1H11).